Consider the following 132-residue polypeptide: Fatty acid-binding protein 1 (132 aa).

A fatty acid is bound by residues Arg106 and 128 to 130 (RYY).

Belongs to the calycin superfamily. Fatty-acid binding protein (FABP) family. In terms of assembly, monomer. Midgut.

The protein resides in the cytoplasm. Its function is as follows. Binds fatty acids in a 1:1 molar ratio. The sequence is that of Fatty acid-binding protein 1 (MFB1) from Manduca sexta (Tobacco hawkmoth).